A 241-amino-acid polypeptide reads, in one-letter code: NAD-dependent protein deacylase (241 aa).

The 237-residue stretch at 1–237 folds into the Deacetylase sirtuin-type domain; it reads MNFPYRNIVV…PKLVDEILAL (237 aa). 13 to 32 lines the NAD(+) pocket; it reads GAGISAESGIQTFRAQDGLW. Positions 57 and 60 each coordinate substrate. Residue 94–97 coordinates NAD(+); it reads QNID. The active-site Proton acceptor is H112. Residues C120 and C139 each coordinate Zn(2+). NAD(+)-binding positions include 179 to 181, 205 to 207, and A223; these read GTS and NLE.

It belongs to the sirtuin family. Class III subfamily. In terms of assembly, monomer. Requires Zn(2+) as cofactor.

It is found in the cytoplasm. Its subcellular location is the host cytoplasm. The protein resides in the host cytosol. It localises to the host nucleus. The catalysed reaction is N(6)-acetyl-L-lysyl-[protein] + NAD(+) + H2O = 2''-O-acetyl-ADP-D-ribose + nicotinamide + L-lysyl-[protein]. The enzyme catalyses N(6)-succinyl-L-lysyl-[protein] + NAD(+) + H2O = 2''-O-succinyl-ADP-D-ribose + nicotinamide + L-lysyl-[protein]. Functionally, NAD-dependent lysine deacetylase and desuccinylase that specifically removes acetyl and succinyl groups on target proteins. Modulates the activities of several proteins which are inactive in their acylated form. In the intracellular pathogen V.parahaemolyticus, this enzyme regulates host response during infection by induction of host histone deacetylation; it specifically causes deacetylation of histone lysine residues H3K56, H3K9, H3K18 and H4K16 which results in transcriptional repression of several host genes involved in epigenetic regulation, immune response, and autophagy. The protein is NAD-dependent protein deacylase of Vibrio parahaemolyticus serotype O3:K6 (strain RIMD 2210633).